A 141-amino-acid polypeptide reads, in one-letter code: Hemoglobin subunit alpha-A (141 aa).

In terms of domain architecture, Globin spans 1–141 (VLSAADKTNV…VGAVLTAKYR (141 aa)). H58 is an O2 binding site. H87 contributes to the heme b binding site.

This sequence belongs to the globin family. Heterotetramer of two alpha chains and two beta chains. In terms of tissue distribution, red blood cells.

Its function is as follows. Involved in oxygen transport from the lung to the various peripheral tissues. In Cygnus olor (Mute swan), this protein is Hemoglobin subunit alpha-A (HBAA).